The sequence spans 244 residues: Methylthioribulose-1-phosphate dehydratase (244 aa).

Substrate is bound at residue Cys-89. The Zn(2+) site is built by His-107 and His-109. The active-site Proton donor/acceptor is the Glu-130. A Zn(2+)-binding site is contributed by His-192.

Belongs to the aldolase class II family. MtnB subfamily. Zn(2+) serves as cofactor.

It is found in the cytoplasm. The enzyme catalyses 5-(methylsulfanyl)-D-ribulose 1-phosphate = 5-methylsulfanyl-2,3-dioxopentyl phosphate + H2O. It functions in the pathway amino-acid biosynthesis; L-methionine biosynthesis via salvage pathway; L-methionine from S-methyl-5-thio-alpha-D-ribose 1-phosphate: step 2/6. Functionally, catalyzes the dehydration of methylthioribulose-1-phosphate (MTRu-1-P) into 2,3-diketo-5-methylthiopentyl-1-phosphate (DK-MTP-1-P). This chain is Methylthioribulose-1-phosphate dehydratase, found in Saccharomyces cerevisiae (strain AWRI1631) (Baker's yeast).